We begin with the raw amino-acid sequence, 1090 residues long: Solute carrier family 38 member 10 (1090 aa).

The next 10 membrane-spanning stretches (helical) occupy residues 9-31 (WGLITNVVNSIVGVSVLTMPFCF), 36-58 (IVLGALLLVFCSWMTHQSCMFLV), 84-104 (LVETSMIGLMLGSCITFYVVI), 123-143 (TVRVFLLFAVSLFIVLPLSLQ), 153-173 (FSAMALLFYTVFMFVIVLSSL), 229-249 (IFASSLNVVTAFYVMVGFFGY), 272-292 (MIRVGFVMSVAVGFPMMILPC), 323-343 (VLTLSVVFGTMVGGVMIPNVE), 345-365 (ILGFTGATMGSLICFICPALI), and 378-398 (VVLWVGLGILVVSTLTTLSVT). Position 441 is a phosphoserine (serine 441). 6 stretches are compositionally biased toward basic and acidic residues: residues 441–454 (SQEKLKPAEDKEVL), 493–508 (EAHRHEPPIPHDKVVV), 517–528 (PEEKKPPPRLPD), 544–560 (ESEKEKQEPERGGEGKR), 587–596 (PRKEDSRPGN), and 607–623 (DSVELKALAADDGREPA). Disordered regions lie at residues 441 to 675 (SQEK…AGSK), 729 to 831 (EIRQ…IDLR), and 857 to 1037 (KAAP…ELAP). 2 positions are modified to phosphoserine: serine 608 and serine 636. Composition is skewed to basic and acidic residues over residues 654–665 (EAAEQREKKEAE), 729–744 (EIRQQRQEGEEDKPKP), and 758–767 (GQEEEAEHAG). Threonine 769 carries the phosphothreonine modification. Serine 887 bears the Phosphoserine mark. The span at 923-936 (RQSGPTKAPVQTQA) shows a compositional bias: polar residues. 3 stretches are compositionally biased toward basic and acidic residues: residues 954-973 (PEVRSEAPRAVHIPPEEQHK), 1004-1013 (ENAKPNRDLK), and 1026-1037 (DLASHPEQELAP).

Belongs to the amino acid/polyamine transporter 2 family. Expressed in neurons, astrocytes and epithelial cells scattered throughout the central nervous system structures including striatum, ependyma, cerebral cortex, hippocampus, hypothalamus, thalamus, pons, and cerebellum (at protein level). Highly expressed in paraventricular hypothalamic nucleus, suprachiasmatic nucleus, anterior hypothalamic area central part, in lateral ventricule and in dorsal 3rd ventricule (at protein level). Expressed in choroid plexus epithelial cells (at protein level).

The protein localises to the membrane. It catalyses the reaction L-glutamate(out) = L-glutamate(in). It carries out the reaction L-glutamine(out) = L-glutamine(in). The catalysed reaction is L-alanine(in) = L-alanine(out). The enzyme catalyses L-serine(in) = L-serine(out). It catalyses the reaction L-leucine(in) = L-leucine(out). Facilitates bidirectional transport of amino acids. May act as a glutamate sensor that regulates glutamate-glutamine cycle and mTOR signaling in the brain. The transport mechanism remains to be elucidated. The protein is Solute carrier family 38 member 10 of Mus musculus (Mouse).